Reading from the N-terminus, the 205-residue chain is Ribosomal RNA small subunit methyltransferase G (205 aa).

S-adenosyl-L-methionine is bound by residues Gly-76, Leu-81, 127-128, and Arg-140; that span reads IE.

Belongs to the methyltransferase superfamily. RNA methyltransferase RsmG family.

It localises to the cytoplasm. It carries out the reaction guanosine(527) in 16S rRNA + S-adenosyl-L-methionine = N(7)-methylguanosine(527) in 16S rRNA + S-adenosyl-L-homocysteine. Functionally, specifically methylates the N7 position of guanine in position 527 of 16S rRNA. The polypeptide is Ribosomal RNA small subunit methyltransferase G (Francisella tularensis subsp. tularensis (strain WY96-3418)).